A 257-amino-acid chain; its full sequence is Diphthine synthase (257 aa).

Residues L9, D85, V88, 113–114, L164, A207, and H232 contribute to the S-adenosyl-L-methionine site; that span reads SI.

Belongs to the diphthine synthase family. Homodimer.

It catalyses the reaction 2-[(3S)-amino-3-carboxypropyl]-L-histidyl-[translation elongation factor 2] + 3 S-adenosyl-L-methionine = diphthine-[translation elongation factor 2] + 3 S-adenosyl-L-homocysteine + 3 H(+). It functions in the pathway protein modification; peptidyl-diphthamide biosynthesis. Its function is as follows. S-adenosyl-L-methionine-dependent methyltransferase that catalyzes the trimethylation of the amino group of the modified target histidine residue in translation elongation factor 2 (EF-2), to form an intermediate called diphthine. The three successive methylation reactions represent the second step of diphthamide biosynthesis. The polypeptide is Diphthine synthase (Methanococcus aeolicus (strain ATCC BAA-1280 / DSM 17508 / OCM 812 / Nankai-3)).